Here is a 455-residue protein sequence, read N- to C-terminus: MAISVFDLFSIGIGPSSSHTVGPMRAARMFARRLRNEELLDSVASVRVELYGSLGATGHGHGTPKAVLLGLEGDSPRTVDVESADDRVETIKSSGRISLLGDHEIAFAYDDDMVLHRRKALPYHANGMTLWAYDAEGAEVLTKTYYSVGGGFVVDEDAVGADRIVLDDTVLKYPFRTGDELLRLARETGLSISALMLENERAWRDEDEIREGLLEIWRVMRACVDRGMTREGILPGGLKVRRRAANTARKLRSEGDPQALAMEWITLYAMAVNEENAAGGRVVTAPTNGAAGIIPAVLHYYMNFVPGADEDGVVRFLLAAGAIGMLFKENASISGAEVGCQGEVGSACSMAAGALAEVLGGSPEQVENAAEIGMEHNLGLTCDPVGGLVQIPCIERNGMAAVKAVTAARMAMRGDGSHKVSLDKVIKTMKETGADMSVKYKETARGGLAVNIIEC.

The protein belongs to the iron-sulfur dependent L-serine dehydratase family. [4Fe-4S] cluster serves as cofactor.

It carries out the reaction L-serine = pyruvate + NH4(+). It functions in the pathway carbohydrate biosynthesis; gluconeogenesis. The chain is L-serine dehydratase (sdaA) from Streptomyces coelicolor (strain ATCC BAA-471 / A3(2) / M145).